Consider the following 457-residue polypeptide: Heme sensor protein HssS (457 aa).

2 helical membrane passes run 9–29 (IAIY…VLTN) and 164–184 (TFLA…VIAS). The region spanning 186 to 238 (YSIIRPVKKLKLATERLIDGDFETPIKQTRKDEIGTLQYHFNKMRESLGQVDQ) is the HAMP domain. The region spanning 246–456 (NVSHEIKTPL…TFTITLPNNS (211 aa)) is the Histidine kinase domain. Phosphohistidine; by autocatalysis is present on H249.

In terms of processing, autophosphorylated.

The protein localises to the cell membrane. It catalyses the reaction ATP + protein L-histidine = ADP + protein N-phospho-L-histidine.. In terms of biological role, member of the two-component regulatory system HssS/HssR involved in intracellular heme homeostasis and tempering of staphylococcal virulence. HssS functions as a heme sensor histidine kinase which is autophosphorylated at a histidine residue and transfers its phosphate group to an aspartate residue of HssR. HssR/HssS activates the expression of hrtAB, an efflux pump, in response to extracellular heme, hemin, hemoglobin or blood. This chain is Heme sensor protein HssS (hssS), found in Staphylococcus aureus (strain USA300).